A 417-amino-acid polypeptide reads, in one-letter code: Riboflavin biosynthesis protein RibBA (417 aa).

A DHBP synthase region spans residues 1 to 204 (MTRFDSIERA…IADLIAWRRK (204 aa)). D-ribulose 5-phosphate is bound by residues 28–29 (RE), Asp33, 141–145 (RPGHT), and Glu165. Glu29 is a Mg(2+) binding site. Residue His144 participates in Mg(2+) binding. The tract at residues 205-417 (HEKHVERVAS…LDDFEAGEML (213 aa)) is GTP cyclohydrolase II. Residue 259–263 (RVHSE) participates in GTP binding. Residues Cys264, Cys275, and Cys277 each coordinate Zn(2+). GTP is bound by residues Gln280, 303–305 (EGR), and Thr325. Catalysis depends on Asp337, which acts as the Proton acceptor; for GTP cyclohydrolase activity. Arg339 functions as the Nucleophile; for GTP cyclohydrolase activity in the catalytic mechanism. The GTP site is built by Thr360 and Lys365.

This sequence in the N-terminal section; belongs to the DHBP synthase family. In the C-terminal section; belongs to the GTP cyclohydrolase II family. Requires Mg(2+) as cofactor. Mn(2+) is required as a cofactor. It depends on Zn(2+) as a cofactor.

The enzyme catalyses D-ribulose 5-phosphate = (2S)-2-hydroxy-3-oxobutyl phosphate + formate + H(+). It carries out the reaction GTP + 4 H2O = 2,5-diamino-6-hydroxy-4-(5-phosphoribosylamino)-pyrimidine + formate + 2 phosphate + 3 H(+). Its pathway is cofactor biosynthesis; riboflavin biosynthesis; 2-hydroxy-3-oxobutyl phosphate from D-ribulose 5-phosphate: step 1/1. It participates in cofactor biosynthesis; riboflavin biosynthesis; 5-amino-6-(D-ribitylamino)uracil from GTP: step 1/4. Catalyzes the conversion of D-ribulose 5-phosphate to formate and 3,4-dihydroxy-2-butanone 4-phosphate. In terms of biological role, catalyzes the conversion of GTP to 2,5-diamino-6-ribosylamino-4(3H)-pyrimidinone 5'-phosphate (DARP), formate and pyrophosphate. This is Riboflavin biosynthesis protein RibBA from Rhodococcus jostii (strain RHA1).